The following is a 397-amino-acid chain: Acetate kinase (397 aa).

Position 8 (N8) interacts with Mg(2+). K15 contributes to the ATP binding site. Position 89 (R89) interacts with substrate. Catalysis depends on D146, which acts as the Proton donor/acceptor. ATP-binding positions include 206–210 (HIGNG), 281–283 (DLR), and 328–332 (GVGEN). Position 381 (E381) interacts with Mg(2+).

The protein belongs to the acetokinase family. In terms of assembly, homodimer. It depends on Mg(2+) as a cofactor. The cofactor is Mn(2+).

It localises to the cytoplasm. The enzyme catalyses acetate + ATP = acetyl phosphate + ADP. It functions in the pathway metabolic intermediate biosynthesis; acetyl-CoA biosynthesis; acetyl-CoA from acetate: step 1/2. Functionally, catalyzes the formation of acetyl phosphate from acetate and ATP. Can also catalyze the reverse reaction. The chain is Acetate kinase from Oceanobacillus iheyensis (strain DSM 14371 / CIP 107618 / JCM 11309 / KCTC 3954 / HTE831).